A 325-amino-acid chain; its full sequence is Odorant receptor 131-2 (325 aa).

At 1–22 the chain is on the extracellular side; sequence MNSTSNSSLGNTFISKTLKEKS. N-linked (GlcNAc...) asparagine glycosylation is found at N2 and N6. A helical transmembrane segment spans residues 23-43; the sequence is LTVQVLVGILLYVNGLMIFTF. The Cytoplasmic portion of the chain corresponds to 44–54; that stretch reads LKKETFRDTRY. The chain crosses the membrane as a helical span at residues 55 to 75; it reads ILFAQTLFVDSALMLFADLTL. Topologically, residues 76–91 are extracellular; it reads VGSAYELFIHIISCYI. C89 and C170 are oxidised to a cystine. A helical membrane pass occupies residues 92–112; the sequence is FCTVMALLSICSPVTLVAMCL. The Cytoplasmic segment spans residues 113–135; the sequence is ERYVAICLPLRHASISSPKNTIN. Residues 136–156 traverse the membrane as a helical segment; sequence GLLIIWGVSSVIPLFIFIVSF. The Extracellular segment spans residues 157–190; sequence TYTPPNAMNSYVVCSNDVMFQVKWLAEMRALSQQ. A helical transmembrane segment spans residues 191–211; the sequence is LLFVIMLCIVGSTYIKIMVAA. Residues 212–227 lie on the Cytoplasmic side of the membrane; the sequence is KSASAENKKSTYKGLR. Residues 228–248 form a helical membrane-spanning segment; that stretch reads TVILHGLQLILGMMQLITPYI. At 249 to 267 the chain is on the extracellular side; sequence DILTLKVDIMLFINVKFSN. Residues 268–285 traverse the membrane as a helical segment; it reads FMLFWIFPRCLSPLVYGL. The Cytoplasmic segment spans residues 286–325; that stretch reads RDKKFYNALKYYAFCGIYVCKKHKIKDSKTIRGAVSIAIY.

The protein belongs to the G-protein coupled receptor 1 family. As to quaternary structure, homodimer. Monomer.

The protein resides in the cell membrane. The protein localises to the cytoplasm. Its function is as follows. Probable olfactory receptor. In Danio rerio (Zebrafish), this protein is Odorant receptor 131-2.